Reading from the N-terminus, the 1140-residue chain is uncharacterized protein (1140 aa).

Disordered stretches follow at residues 1–49 (MGSS…TSPE), 97–243 (SSDI…STIS), 280–427 (TSSS…KSSV), 512–541 (ASST…DLSK), 702–747 (FSTP…STAS), 916–1059 (CPEK…PIGR), and 1080–1103 (LSSS…GTSS). A compositionally biased stretch (polar residues) spans 105–129 (VNDVESSTSGPSNSYSALSSTNAQL). Low complexity-rich tracts occupy residues 130–154 (SSST…TSSS), 172–214 (TTAS…TTSD), and 221–243 (SSST…STIS). Positions 516–528 (LGSKVSSSNSRMA) are enriched in polar residues. Low complexity-rich tracts occupy residues 529–541 (TSKT…DLSK) and 703–718 (STPE…VTSE). Polar residues predominate over residues 719–733 (APSTVSSMTTSAPFI). The span at 734 to 747 (NNSTSARPSPSTAS) shows a compositional bias: low complexity. The segment covering 949–961 (SFKDMKTSQETKK) has biased composition (basic and acidic residues). Positions 977 to 997 (EKTSPTTKASPSTSPSESKAA) are enriched in low complexity. 3 stretches are compositionally biased toward polar residues: residues 998–1023 (GNTS…STSV), 1031–1055 (TKNS…STES), and 1089–1103 (RSTT…GTSS).

This is an uncharacterized protein from Saccharomyces cerevisiae (strain ATCC 204508 / S288c) (Baker's yeast).